Consider the following 916-residue polypeptide: Protein translocase subunit SecA (916 aa).

ATP-binding positions include Gln87, 105–109 (GEGKT), and Asp512. The disordered stretch occupies residues 857–916 (QHAEAPSMEQAVAGEEEELPEGPAPVVPLEPVRNEQKIGRNEPCPCGSGKKYKHCHGQLD). Residues Cys900, Cys902, Cys911, and His912 each coordinate Zn(2+). A compositionally biased stretch (basic residues) spans 906 to 916 (KKYKHCHGQLD).

The protein belongs to the SecA family. As to quaternary structure, monomer and homodimer. Part of the essential Sec protein translocation apparatus which comprises SecA, SecYEG and auxiliary proteins SecDF-YajC and YidC. Zn(2+) is required as a cofactor.

Its subcellular location is the cell inner membrane. The protein resides in the cytoplasm. The catalysed reaction is ATP + H2O + cellular proteinSide 1 = ADP + phosphate + cellular proteinSide 2.. In terms of biological role, part of the Sec protein translocase complex. Interacts with the SecYEG preprotein conducting channel. Has a central role in coupling the hydrolysis of ATP to the transfer of proteins into and across the cell membrane, serving both as a receptor for the preprotein-SecB complex and as an ATP-driven molecular motor driving the stepwise translocation of polypeptide chains across the membrane. The chain is Protein translocase subunit SecA from Pseudomonas aeruginosa (strain LESB58).